The sequence spans 1707 residues: Kinesin-like protein KIF1A (1707 aa).

Residues Ser-5–Ile-354 form the Kinesin motor domain. ATP is bound by residues Gly-102, Lys-103, Ser-104, Tyr-105, and Ser-215. A Mg(2+)-binding site is contributed by Ser-104. Positions Ser-439–Arg-466 form a coiled coil. Residues Thr-525–Val-581 enclose the FHA domain. Coiled coils occupy residues Glu-637 to Gln-671 and Leu-811 to Val-831. Positions Gln-657–Arg-1105 are required for interaction with CALM1, PPFIA2 and TANC2. 2 disordered regions span residues Pro-1424–Asn-1462 and Thr-1536–Pro-1576. Positions Leu-1429–Gly-1453 are enriched in low complexity. One can recognise a PH domain in the interval Ile-1592–Ala-1690.

It belongs to the TRAFAC class myosin-kinesin ATPase superfamily. Kinesin family. Unc-104 subfamily. In terms of assembly, dimeric motor; dimerization is required for ATP-driven processive motility. Monomer in vitro. Interacts with PPFIA1 and PPFIA4. Interacts with CALM1; the interaction is increased in presence of calcium and increases neuronal dense core vesicles motility. Interacts with PPFIA2 and TANC2; both interactions allow the recruitment of neuronal dense core vesicles to dendritic spines and decrease in presence of calcium. Interacts with SYT4 (unphosphorylated) and SYT11; both interactions increase in presence of calcium. Interacts with MADD.

It localises to the cytoplasm. The protein localises to the cytoskeleton. Its subcellular location is the cell projection. The protein resides in the neuron projection. It is found in the axon. It localises to the perinuclear region. The protein localises to the synapse. Its subcellular location is the cytoplasmic vesicle. The protein resides in the secretory vesicle. It is found in the neuronal dense core vesicle membrane. It catalyses the reaction ATP + H2O + a kinesin associated with a microtubule at position (n) = ADP + phosphate a kinesin associated with a microtubule at position (n+1, toward the plus end).. Its function is as follows. Kinesin motor with a plus-end-directed microtubule motor activity, involved in anterograde axonal transport of synaptic vesicle precursors. Also required for neuronal dense core vesicles (DCVs) transport to the dendritic spines and axons. The interaction calcium-dependent with CALM1 increases vesicle motility and interaction with the scaffolding proteins PPFIA2 and TANC2 recruits DCVs to synaptic sites. In Rattus norvegicus (Rat), this protein is Kinesin-like protein KIF1A.